A 493-amino-acid polypeptide reads, in one-letter code: Amphoterin-induced protein 1 (493 aa).

The signal sequence occupies residues 1-27 (MQPQRDLRGLWLLLLSLFLLLFEVARA). Residues 28-61 (GRPVVSCPANCLCASNILSCSKQQLPNVPQSLPG) form the LRRNT domain. Over 28–372 (GRPVVSCPAN…LHGHHDTLNT (345 aa)) the chain is Extracellular. Intrachain disulfides connect C34-C40 and C38-C47. LRR repeat units follow at residues 62–83 (YTAL…WTPT), 87–108 (NLHS…AFVP), 111–132 (NLRY…LFSG), 135–156 (ALEV…AFED), 159–179 (QLQK…ELIK), and 186–206 (KLTL…TDLQ). N72 carries N-linked (GlcNAc...) asparagine glycosylation. An LRRCT domain is found at 221 to 272 (NPLECDCKLYQLFSHWQYRQLSSVMDFQEDLYCVHSKKLHNVFSLDFFNCSE). Disulfide bonds link C225–C253, C227–C270, and C290–C341. N-linked (GlcNAc...) asparagine glycosylation is found at N269, N315, N349, and N360. Positions 269–353 (NCSEYKESAW…MGETFNETLS (85 aa)) constitute an Ig-like C2-type domain. The helical transmembrane segment at 373–393 (AYTTLVGCILSVVLVLIYLYL) threads the bilayer. Residues 394–493 (TPCRCWCRGV…SVFSDTPIVV (100 aa)) lie on the Cytoplasmic side of the membrane. The interval 405–493 (KPSSHQGDSL…SVFSDTPIVV (89 aa)) is disordered. Over residues 408-424 (SHQGDSLSSSMLSTTPN) the composition is skewed to polar residues. Positions 431–442 (GDKDDGFDRRVA) are enriched in basic and acidic residues. S477 and S481 each carry phosphoserine.

The protein belongs to the immunoglobulin superfamily. AMIGO family. Homodimer, and heterodimer with AMIGO2 and AMIGO3. Interacts with KCNB1.

The protein resides in the cell membrane. It localises to the perikaryon. Its subcellular location is the cell projection. It is found in the dendrite. The protein localises to the axon. Promotes growth and fasciculation of neurites from cultured hippocampal neurons. May be involved in fasciculation as well as myelination of developing neural axons. May have a role in regeneration as well as neural plasticity in the adult nervous system. May mediate homophilic as well as heterophilic cell-cell interaction and contribute to signal transduction through its intracellular domain. Assembled with KCNB1 modulates the gating characteristics of the delayed rectifier voltage-dependent potassium channel KCNB1. This chain is Amphoterin-induced protein 1, found in Rattus norvegicus (Rat).